Reading from the N-terminus, the 210-residue chain is ATP-dependent Clp protease proteolytic subunit (210 aa).

The active-site Nucleophile is Ser107. His132 is a catalytic residue.

It belongs to the peptidase S14 family. In terms of assembly, fourteen ClpP subunits assemble into 2 heptameric rings which stack back to back to give a disk-like structure with a central cavity, resembling the structure of eukaryotic proteasomes.

The protein resides in the cytoplasm. It catalyses the reaction Hydrolysis of proteins to small peptides in the presence of ATP and magnesium. alpha-casein is the usual test substrate. In the absence of ATP, only oligopeptides shorter than five residues are hydrolyzed (such as succinyl-Leu-Tyr-|-NHMec, and Leu-Tyr-Leu-|-Tyr-Trp, in which cleavage of the -Tyr-|-Leu- and -Tyr-|-Trp bonds also occurs).. Functionally, cleaves peptides in various proteins in a process that requires ATP hydrolysis. Has a chymotrypsin-like activity. Plays a major role in the degradation of misfolded proteins. This is ATP-dependent Clp protease proteolytic subunit from Chromobacterium violaceum (strain ATCC 12472 / DSM 30191 / JCM 1249 / CCUG 213 / NBRC 12614 / NCIMB 9131 / NCTC 9757 / MK).